The primary structure comprises 191 residues: Probable ribosome biogenesis protein RLP24 (191 aa).

Ser136 carries the post-translational modification Phosphoserine.

The protein belongs to the eukaryotic ribosomal protein eL24 family. Associated with nucleolar and cytoplasmic pre-60S particles. At the end of biogenesis it dissociates from cytoplasmic pre-60S particles and is likely to be exchanged for its ribosomal homologue, RPL24.

The protein resides in the nucleus. It is found in the nucleolus. Its function is as follows. Involved in the biogenesis of the 60S ribosomal subunit. Ensures the docking of NOG1 to pre-60S particles. This chain is Probable ribosome biogenesis protein RLP24 (RpL24-like), found in Drosophila melanogaster (Fruit fly).